A 264-amino-acid chain; its full sequence is Carbonic anhydrase 7 (264 aa).

An Alpha-carbonic anhydrase domain is found at 5–262; the sequence is HCWGYGQDDG…LKGRVVKASF (258 aa). His-66 serves as the catalytic Proton donor/acceptor. His-96, His-98, and His-121 together coordinate Zn(2+). 201–202 serves as a coordination point for substrate; the sequence is TT.

It belongs to the alpha-carbonic anhydrase family. Requires Zn(2+) as cofactor.

Its subcellular location is the cytoplasm. It carries out the reaction hydrogencarbonate + H(+) = CO2 + H2O. In terms of biological role, reversible hydration of carbon dioxide. The polypeptide is Carbonic anhydrase 7 (Ca7) (Mus musculus (Mouse)).